The primary structure comprises 240 residues: Large ribosomal subunit protein uL2 (240 aa).

A compositionally biased stretch (polar residues) spans 1–11; the sequence is MGKRLISQNRG. Disordered stretches follow at residues 1 to 31 and 206 to 240; these read MGKRLISQNRGRGTPKYRSPSHKRKGAVKYR and GGGRHQHLGKPSSVSRHTSPGRKVGHIASRRTGRK. 2 stretches are compositionally biased toward basic residues: residues 13–28 and 224–240; these read GTPKYRSPSHKRKGAV and SPGRKVGHIASRRTGRK.

This sequence belongs to the universal ribosomal protein uL2 family. In terms of assembly, part of the 50S ribosomal subunit. Forms a bridge to the 30S subunit in the 70S ribosome.

Its function is as follows. One of the primary rRNA binding proteins. Required for association of the 30S and 50S subunits to form the 70S ribosome, for tRNA binding and peptide bond formation. It has been suggested to have peptidyltransferase activity; this is somewhat controversial. Makes several contacts with the 16S rRNA in the 70S ribosome. This Methanococcus maripaludis (strain C6 / ATCC BAA-1332) protein is Large ribosomal subunit protein uL2.